A 194-amino-acid chain; its full sequence is Probable GTP-binding protein EngB (194 aa).

The EngB-type G domain occupies 22-194 (DLPEFALAGR…KFWDWIEDKM (173 aa)). GTP-binding positions include 30 to 37 (GRSNVGKS), 57 to 61 (GKTQT), 75 to 78 (DVPG), 142 to 145 (TKMD), and 175 to 177 (FSS). Mg(2+)-binding residues include serine 37 and threonine 59.

This sequence belongs to the TRAFAC class TrmE-Era-EngA-EngB-Septin-like GTPase superfamily. EngB GTPase family. Requires Mg(2+) as cofactor.

Necessary for normal cell division and for the maintenance of normal septation. The polypeptide is Probable GTP-binding protein EngB (Lactobacillus gasseri (strain ATCC 33323 / DSM 20243 / BCRC 14619 / CIP 102991 / JCM 1131 / KCTC 3163 / NCIMB 11718 / NCTC 13722 / AM63)).